A 235-amino-acid chain; its full sequence is Large ribosomal subunit protein uL1 (235 aa).

Residues 1–22 (MSKNSKAYRAAAEKVDRSNPYT) form a disordered region.

It belongs to the universal ribosomal protein uL1 family. In terms of assembly, part of the 50S ribosomal subunit.

In terms of biological role, binds directly to 23S rRNA. The L1 stalk is quite mobile in the ribosome, and is involved in E site tRNA release. Protein L1 is also a translational repressor protein, it controls the translation of the L11 operon by binding to its mRNA. The polypeptide is Large ribosomal subunit protein uL1 (Mycobacterium ulcerans (strain Agy99)).